A 338-amino-acid polypeptide reads, in one-letter code: GTPase Obg (338 aa).

In terms of domain architecture, Obg spans 1–159 (MQFIDEVKIH…RWLRLELKLM (159 aa)). Positions 66-91 (KAGRGKNGMGKDRHGANGDDLTIPVP) are disordered. In terms of domain architecture, OBG-type G spans 160-331 (ADVGLLGFPN…LLDEIARHLW (172 aa)). GTP contacts are provided by residues 166-173 (GFPNVGKS), 191-195 (FTTIK), 213-216 (DIPG), 283-286 (NKID), and 312-314 (SAA). Mg(2+)-binding residues include Ser173 and Thr193.

The protein belongs to the TRAFAC class OBG-HflX-like GTPase superfamily. OBG GTPase family. In terms of assembly, monomer. It depends on Mg(2+) as a cofactor.

It is found in the cytoplasm. In terms of biological role, an essential GTPase which binds GTP, GDP and possibly (p)ppGpp with moderate affinity, with high nucleotide exchange rates and a fairly low GTP hydrolysis rate. Plays a role in control of the cell cycle, stress response, ribosome biogenesis and in those bacteria that undergo differentiation, in morphogenesis control. The polypeptide is GTPase Obg (Geobacter metallireducens (strain ATCC 53774 / DSM 7210 / GS-15)).